The sequence spans 165 residues: Cysteine-rich hydrophobic domain-containing protein 2 (165 aa).

Residues 1–26 (MADFDEIYEEEEDEERALEEQLLKYS) adopt a coiled-coil conformation. The CHIC motif (Cys-rich) signature appears at 88–106 (CGCLCCCCTLGCSMWPVIC).

Belongs to the CHIC family. Post-translationally, palmitoylation in the CHIC motif is required for membrane association.

The protein localises to the cell membrane. It is found in the cytoplasmic vesicle. In Homo sapiens (Human), this protein is Cysteine-rich hydrophobic domain-containing protein 2 (CHIC2).